The chain runs to 253 residues: tRNA (guanine-N(1)-)-methyltransferase (253 aa).

S-adenosyl-L-methionine contacts are provided by residues glycine 110 and 130 to 135; that span reads IGDYIL.

It belongs to the RNA methyltransferase TrmD family. Homodimer.

It is found in the cytoplasm. The catalysed reaction is guanosine(37) in tRNA + S-adenosyl-L-methionine = N(1)-methylguanosine(37) in tRNA + S-adenosyl-L-homocysteine + H(+). Specifically methylates guanosine-37 in various tRNAs. This is tRNA (guanine-N(1)-)-methyltransferase from Carboxydothermus hydrogenoformans (strain ATCC BAA-161 / DSM 6008 / Z-2901).